Reading from the N-terminus, the 1174-residue chain is Pecanex-like protein 4 (1174 aa).

A run of 14 helical transmembrane segments spans residues 40–60 (IYVN…TGTL), 72–92 (AAAL…LISV), 140–160 (TVFH…YLLP), 173–193 (TAVL…SLIV), 217–237 (LYIF…NIPA), 244–264 (ILHI…LPPP), 284–304 (SMST…AAVV), 307–327 (FIPS…LLSL), 366–386 (FLFI…HHYV), 394–414 (SGAQ…VWIL), 451–471 (IGAV…VAFL), 543–563 (LIQF…LWTE), 580–600 (VFAP…SPLL), and 643–663 (LTAA…LPGS). Residues 785 to 797 (PSTQENKTENTGE) show a composition bias toward polar residues. A disordered region spans residues 785 to 875 (PSTQENKTEN…DDHSAGTGPK (91 aa)). N-linked (GlcNAc...) asparagine glycosylation is present at asparagine 790. Residues 798–810 (ASPALPPAANSSP) show a composition bias toward low complexity. Positions 835–846 (PAIKNRKEKLQS) are enriched in basic and acidic residues. Residues asparagine 1122 and asparagine 1149 are each glycosylated (N-linked (GlcNAc...) asparagine).

Belongs to the pecanex family.

The protein resides in the membrane. The chain is Pecanex-like protein 4 from Mus musculus (Mouse).